Reading from the N-terminus, the 232-residue chain is Ribosomal RNA small subunit methyltransferase G (232 aa).

S-adenosyl-L-methionine-binding positions include Gly-93, Leu-98, 144–145 (VE), and Arg-163.

Belongs to the methyltransferase superfamily. RNA methyltransferase RsmG family.

The protein resides in the cytoplasm. It carries out the reaction guanosine(527) in 16S rRNA + S-adenosyl-L-methionine = N(7)-methylguanosine(527) in 16S rRNA + S-adenosyl-L-homocysteine. Its function is as follows. Specifically methylates the N7 position of guanine in position 527 of 16S rRNA. The polypeptide is Ribosomal RNA small subunit methyltransferase G (Burkholderia pseudomallei (strain 1710b)).